Reading from the N-terminus, the 460-residue chain is Cyclic 2,3-diphosphoglycerate synthetase (460 aa).

Homodimer.

The protein resides in the cytoplasm. It catalyses the reaction (2R)-2,3-bisphosphoglycerate + ATP + H(+) = cyclic (2R)-2,3-bisphosphoglycerate + ADP + phosphate. Functionally, catalyzes the formation of cyclic 2,3-diphosphoglycerate (cDPG) by formation of an intramolecular phosphoanhydride bond at the expense of ATP. It is also able to catalyze the hydrolysis of cDPG but with significant slower rates (8-10 times). May be involved in thermoadaptation. In Methanothermus fervidus (strain ATCC 43054 / DSM 2088 / JCM 10308 / V24 S), this protein is Cyclic 2,3-diphosphoglycerate synthetase (cpgS).